An 85-amino-acid chain; its full sequence is Large ribosomal subunit protein bL27 (85 aa).

Positions 1-22 are disordered; the sequence is MAHKKAGGSTRNGRDSESKRLG.

The protein belongs to the bacterial ribosomal protein bL27 family.

The chain is Large ribosomal subunit protein bL27 from Marinomonas sp. (strain MWYL1).